The chain runs to 130 residues: MNLIAKLEQEEIERALAGKTIPDFAPGDTVIVNVNVVEGNRKRVQAYEGVVIAIRNRGLNSNFIVRKISSGEGVERTFQTYSPLLASIVVKRRGDVRRAKLYYLRERSGKSARIKEKLVSKDRAAAASQE.

The protein belongs to the bacterial ribosomal protein bL19 family.

In terms of biological role, this protein is located at the 30S-50S ribosomal subunit interface and may play a role in the structure and function of the aminoacyl-tRNA binding site. The polypeptide is Large ribosomal subunit protein bL19 (Burkholderia orbicola (strain MC0-3)).